The following is an 83-amino-acid chain: Small ribosomal subunit protein uS17 (83 aa).

This sequence belongs to the universal ribosomal protein uS17 family. Part of the 30S ribosomal subunit.

In terms of biological role, one of the primary rRNA binding proteins, it binds specifically to the 5'-end of 16S ribosomal RNA. The polypeptide is Small ribosomal subunit protein uS17 (Francisella tularensis subsp. holarctica (strain FTNF002-00 / FTA)).